Consider the following 35-residue polypeptide: Beta-amanitin proprotein (35 aa).

Residues 1 to 10 constitute a propeptide that is removed on maturation; sequence MSDINATRLP. Residues 11–18 constitute a cross-link (cyclopeptide (Ile-Pro)); the sequence is IWGIGCDP. Positions 12–16 form a cross-link, 2'-cysteinyl-6'-hydroxytryptophan sulfoxide (Trp-Cys); the sequence is WGIGC. A propeptide spanning residues 19–35 is cleaved from the precursor; the sequence is CVGDDVTALLTRGEALC.

Belongs to the MSDIN fungal toxin family. In terms of processing, processed by the macrocyclase-peptidase enzyme POPB to yield a toxic cyclic octapeptide. POPB first removes 10 residues from the N-terminus. Conformational trapping of the remaining peptide forces the enzyme to release this intermediate rather than proceed to macrocyclization. The enzyme rebinds the remaining peptide in a different conformation and catalyzes macrocyclization of the N-terminal 8 residues. In terms of tissue distribution, expressed in basidiocarps.

In terms of biological role, toxin belonging to the bicyclic octapeptides amatoxins that acts by binding non-competitively to RNA polymerase II and greatly slowing the elongation of transcripts from target promoters. This chain is Beta-amanitin proprotein, found in Amanita exitialis (Guangzhou destroying angel).